The following is a 617-amino-acid chain: Dihydroxy-acid dehydratase (617 aa).

A Mg(2+)-binding site is contributed by Asp-81. Cys-122 lines the [2Fe-2S] cluster pocket. The Mg(2+) site is built by Asp-123 and Lys-124. Lys-124 bears the N6-carboxylysine mark. Cys-195 contacts [2Fe-2S] cluster. Glu-491 is a binding site for Mg(2+). The active-site Proton acceptor is the Ser-517.

This sequence belongs to the IlvD/Edd family. As to quaternary structure, homodimer. It depends on [2Fe-2S] cluster as a cofactor. The cofactor is Mg(2+).

The enzyme catalyses (2R)-2,3-dihydroxy-3-methylbutanoate = 3-methyl-2-oxobutanoate + H2O. The catalysed reaction is (2R,3R)-2,3-dihydroxy-3-methylpentanoate = (S)-3-methyl-2-oxopentanoate + H2O. It participates in amino-acid biosynthesis; L-isoleucine biosynthesis; L-isoleucine from 2-oxobutanoate: step 3/4. The protein operates within amino-acid biosynthesis; L-valine biosynthesis; L-valine from pyruvate: step 3/4. Its function is as follows. Functions in the biosynthesis of branched-chain amino acids. Catalyzes the dehydration of (2R,3R)-2,3-dihydroxy-3-methylpentanoate (2,3-dihydroxy-3-methylvalerate) into 2-oxo-3-methylpentanoate (2-oxo-3-methylvalerate) and of (2R)-2,3-dihydroxy-3-methylbutanoate (2,3-dihydroxyisovalerate) into 2-oxo-3-methylbutanoate (2-oxoisovalerate), the penultimate precursor to L-isoleucine and L-valine, respectively. This Nitrosococcus oceani (strain ATCC 19707 / BCRC 17464 / JCM 30415 / NCIMB 11848 / C-107) protein is Dihydroxy-acid dehydratase.